We begin with the raw amino-acid sequence, 142 residues long: Large ribosomal subunit protein uL13 (142 aa).

It belongs to the universal ribosomal protein uL13 family. In terms of assembly, part of the 50S ribosomal subunit.

Functionally, this protein is one of the early assembly proteins of the 50S ribosomal subunit, although it is not seen to bind rRNA by itself. It is important during the early stages of 50S assembly. This chain is Large ribosomal subunit protein uL13, found in Pseudoalteromonas atlantica (strain T6c / ATCC BAA-1087).